We begin with the raw amino-acid sequence, 977 residues long: Phosphatidylinositol 4-kinase PIK1alpha (977 aa).

Residues 1-125 form the PIK helical domain; that stretch reads MSADITETPN…QAVRNLITKI (125 aa). The tract at residues 205–261 is disordered; that stretch reads MSADIPKGSHSDDETATSSSIKPSLSRSASVPRRNTKKTSLSFSSDESEAYTTDDDD. The span at 220 to 233 shows a compositional bias: polar residues; the sequence is ATSSSIKPSLSRSA. The span at 250 to 261 shows a compositional bias: acidic residues; it reads DESEAYTTDDDD. The region spanning 679–960 is the PI3K/PI4K catalytic domain; that stretch reads EDWNTKKQRI…FLIGKSLGSM (282 aa). The interval 685–691 is G-loop; sequence KQRIKKS. The interval 826–834 is catalytic loop; that stretch reads QIKDRHNGN. The interval 845-869 is activation loop; sequence HIDFGFLLSNSPGSVGFEAAPFKLT.

The protein belongs to the PI3/PI4-kinase family. Type III PI4K subfamily.

The protein localises to the nucleus. It catalyses the reaction a 1,2-diacyl-sn-glycero-3-phospho-(1D-myo-inositol) + ATP = a 1,2-diacyl-sn-glycero-3-phospho-(1D-myo-inositol 4-phosphate) + ADP + H(+). Acts on phosphatidylinositol (PI) in the first committed step in the production of the second messenger inositol 1,4,5,-trisphosphate. This is Phosphatidylinositol 4-kinase PIK1alpha (PIKALPHA) from Candida albicans (strain SC5314 / ATCC MYA-2876) (Yeast).